A 135-amino-acid chain; its full sequence is Insoluble matrix shell protein 5 (135 aa).

Residues 1 to 16 (MILVVTLACLIAVVCC) form the signal peptide. 2 consecutive EF-hand domains span residues 21 to 56 (TDQGQISKVFKAYDIDGNNKISRVEGTMVFRDADLN) and 93 to 128 (IEFVEGNQGFDHFDKNRDNEISSWEFTQTWMETVRP). The Ca(2+) site is built by Asp-34, Asp-36, Asn-38, Lys-40, Glu-45, Asp-106, Asn-108, Asp-110, Glu-112, and Glu-117.

In terms of tissue distribution, component of the acid-insoluble organic matrix of the calcified shell.

It localises to the secreted. In Ruditapes philippinarum (Japanese carpet shell), this protein is Insoluble matrix shell protein 5.